A 59-amino-acid chain; its full sequence is UPF0434 protein VS_2060 (59 aa).

This sequence belongs to the UPF0434 family.

This Vibrio atlanticus (strain LGP32) (Vibrio splendidus (strain Mel32)) protein is UPF0434 protein VS_2060.